Here is a 587-residue protein sequence, read N- to C-terminus: MFS-type transporter opaD (587 aa).

The next 9 helical transmembrane spans lie at Val-87–Leu-107, Met-124–Leu-146, Trp-153–Pro-173, Ile-184–Val-204, Gly-214–Phe-234, Trp-242–Phe-262, Ile-284–Gly-304, Ile-315–Trp-335, and Leu-357–Phe-377. N-linked (GlcNAc...) asparagine glycosylation is present at Asn-382. 5 helical membrane passes run Ile-393–Leu-413, Gly-414–Leu-434, Ile-447–Val-467, Leu-483–Phe-503, and Val-554–Trp-574.

It belongs to the major facilitator superfamily. TCR/Tet family.

The protein resides in the membrane. MFS-type transporter; part of the gene cluster that mediates the biosynthesis of oxepinamides, derivatives of anthranilyl-containing tripeptides that share an oxepin ring and a fused pyrimidinone moiety. This Aspergillus ustus protein is MFS-type transporter opaD.